The chain runs to 668 residues: Protein PLASTID TRANSCRIPTIONALLY ACTIVE 10 (668 aa).

The N-terminal 40 residues, 1 to 40 (MQICQTKLNFTFPNPTNPNFCKPKALQWSPPRRISLLPCR), are a transit peptide targeting the chloroplast. The region spanning 272 to 340 (GMVCEGTVTT…YRFRFPLELR (69 aa)) is the S1 motif domain. The span at 362–391 (RDGDTNPDEIRRDCGRPPEPRKDPGSKPEE) shows a compositional bias: basic and acidic residues. The disordered stretch occupies residues 362–394 (RDGDTNPDEIRRDCGRPPEPRKDPGSKPEEEGL). S434 is subject to Phosphoserine. Positions 611–668 (KRKEGSTLASQEEETESEEEEEDDDDFDDFDYSILSDESSIGYSEQQPLVNGTQVLTD) are disordered. The segment covering 621–641 (QEEETESEEEEEDDDDFDDFD) has biased composition (acidic residues). A compositionally biased stretch (polar residues) spans 646–668 (SDESSIGYSEQQPLVNGTQVLTD).

In terms of assembly, component of the transcriptionally active chromosome (TAC) complexes. Interacts with PTAC7.

Its subcellular location is the plastid. The protein resides in the chloroplast. The polypeptide is Protein PLASTID TRANSCRIPTIONALLY ACTIVE 10 (Arabidopsis thaliana (Mouse-ear cress)).